Consider the following 526-residue polypeptide: Reticulocyte-binding protein homolog 5 (526 aa).

Positions 1-24 (MIRIKKKLILTIIYIHLFILNRLS) are cleaved as a signal peptide. The tract at residues 33 to 51 (KNQENNLTLLPIKSTEEEK) is mediates interaction with human BSG. N-linked (GlcNAc...) asparagine glycosylation is found at asparagine 38 and asparagine 214. Intrachain disulfides connect cysteine 224–cysteine 317 and cysteine 345–cysteine 351. A compositionally biased stretch (acidic residues) spans 259-279 (EIDDKSEETDDETEEVEDSIQ). The disordered stretch occupies residues 259-294 (EIDDKSEETDDETEEVEDSIQDTDSNHTPSNKKKND). Asparagine 297 carries an N-linked (GlcNAc...) asparagine glycan.

As to quaternary structure, forms a complex composed of RH5, P113 and human BSG/basigin; the complex bridges the merozoite and host erythrocyte membranes. Within the complex, interacts (via C-terminus) with human BSG/basigin isoform 2 (via the extracellular domain); the interaction is independent of BSG glycosylation status. Weakly interacts with P.troglodytes BSG but not with G.gorilla BSG. Also, interacts (via N-terminus) with P113; the interaction tethers RH5 to the merozoite membrane. Component of the PfRH5 adhesion complex composed of 1 copy of CyRPA, RH5 and RIPR; the complex is formed during merozoite invasion of host erythrocytes specifically at the interface between the parasite and host membranes. Within the complex, interacts with CyRPA. CyRPA recruits RIPR to the RH5-P113-BSG complex; the formation of the PfRH5 adhesion complex increases the affinity of RH5 for BSG and probably leads to the release of RH5 from P113 while maintaining the interaction of the PfRH5 adhesion complex with BSG. Cleaved into a 45kDa form during merozoite invasion of host erythrocyte.

The protein localises to the secreted. Its subcellular location is the cytoplasmic vesicle. The protein resides in the secretory vesicle. It is found in the rhoptry lumen. It localises to the host cell membrane. Essential for the invasion of host erythrocytes by blood stage merozoites. By binding P113 at the surface of the merozoite and human BSG/basigin on the erythrocyte membrane, leads to the establishment of a tight junction between the merozoite and host erythrocyte membranes. In addition, the interaction with BSG results in BSG dimerization which triggers an increase in intracellular Ca(2+) in the erythrocyte. This essential step leads to a rearrangement of the erythrocyte cytoskeleton required for the merozoite invasion. This is Reticulocyte-binding protein homolog 5 from Plasmodium falciparum (isolate 3D7).